A 407-amino-acid chain; its full sequence is MRWVRALLKNASLAGAPKYIEHFSKFSPSPLSMKQFLDFGSSNACEKTSFTFLRQELPVRLANIMKEINLLPDRVLGTPSVQLVQSWYVQSLLDIMEFLDKDPEDHRTLSQFTDALVTIRNRHNDVVPTMAQGVLEYKDTYGDDPVSNQNIQYFLDRFYLSRISIRMLINQHTLIFDGSTNPAHPKHIGSIDPNCSVSDVVKDAYDMAKLLCDKYYMASPDLEIQEVNATNANQPIHMVYVPSHLYHMLFELFKNAMRATVESHESSLTLPPIKIMVALGEEDLSIKMSDRGGGVPLRKIERLFSYMYSTAPTPQPGTGGTPLAGFGYGLPISRLYAKYFQGDLQLFSMEGFGTDAVIYLKALSTDSVERLPVYNKSAWRHYQTIQEAGDWCVPSTEPKNTSTYRVS.

A Histidine kinase domain is found at 135-364 (LEYKDTYGDD…DAVIYLKALS (230 aa)). Phosphotyrosine is present on residues tyrosine 215 and tyrosine 216. Residues 251–258 (ELFKNAMR), aspartate 290, 309–310 (ST), and 325–330 (GFGYGL) contribute to the ATP site. Lysine 376 is subject to N6-succinyllysine.

It belongs to the PDK/BCKDK protein kinase family. In terms of assembly, homodimer, and heterodimer with PDK1. Interacts with the pyruvate dehydrogenase complex subunit DLAT, and is part of the multimeric pyruvate dehydrogenase complex that contains multiple copies of pyruvate dehydrogenase (E1), dihydrolipoamide acetyltransferase (DLAT, E2) and lipoamide dehydrogenase (DLD, E3). As to expression, detected in heart (at protein level).

Its subcellular location is the mitochondrion matrix. It catalyses the reaction L-seryl-[pyruvate dehydrogenase E1 alpha subunit] + ATP = O-phospho-L-seryl-[pyruvate dehydrogenase E1 alpha subunit] + ADP + H(+). Kinase that plays a key role in the regulation of glucose and fatty acid metabolism and homeostasis via phosphorylation of the pyruvate dehydrogenase subunits PDHA1 and PDHA2. This inhibits pyruvate dehydrogenase activity, and thereby regulates metabolite flux through the tricarboxylic acid cycle, down-regulates aerobic respiration and inhibits the formation of acetyl-coenzyme A from pyruvate. Inhibition of pyruvate dehydrogenase decreases glucose utilization and increases fat metabolism. Mediates cellular responses to insulin. Plays an important role in maintaining normal blood glucose levels and in metabolic adaptation to nutrient availability. Via its regulation of pyruvate dehydrogenase activity, plays an important role in maintaining normal blood pH and in preventing the accumulation of ketone bodies under starvation. Plays a role in the regulation of cell proliferation and in resistance to apoptosis under oxidative stress. Plays a role in p53/TP53-mediated apoptosis. The sequence is that of [Pyruvate dehydrogenase (acetyl-transferring)] kinase isozyme 2, mitochondrial (Pdk2) from Mus musculus (Mouse).